The sequence spans 397 residues: GTPase Obg (397 aa).

An Obg domain is found at Met1–Leu159. A disordered region spans residues Ser22–Ser44. The span at Gly33–Gly43 shows a compositional bias: gly residues. Residues Ala160–Glu333 form the OBG-type G domain. Residues Gly166–Ser173, Phe191–Val195, Asp213–Gly216, Asn283–Asp286, and Ser314–Val316 contribute to the GTP site. The Mg(2+) site is built by Ser173 and Thr193. Residues Thr359–Asp389 form a disordered region. Acidic residues predominate over residues Glu361 to Asp389.

The protein belongs to the TRAFAC class OBG-HflX-like GTPase superfamily. OBG GTPase family. Monomer. Mg(2+) serves as cofactor.

It is found in the cytoplasm. Its function is as follows. An essential GTPase which binds GTP, GDP and possibly (p)ppGpp with moderate affinity, with high nucleotide exchange rates and a fairly low GTP hydrolysis rate. Plays a role in control of the cell cycle, stress response, ribosome biogenesis and in those bacteria that undergo differentiation, in morphogenesis control. This chain is GTPase Obg, found in Pseudoalteromonas atlantica (strain T6c / ATCC BAA-1087).